We begin with the raw amino-acid sequence, 448 residues long: SET domain-containing protein SmydA-8, isoform B (448 aa).

In terms of domain architecture, SET spans 42 to 273 (PSWRVADSPI…AGAEITMSYA (232 aa)).

Belongs to the class V-like SAM-binding methyltransferase superfamily.

The sequence is that of SET domain-containing protein SmydA-8, isoform B from Drosophila melanogaster (Fruit fly).